We begin with the raw amino-acid sequence, 148 residues long: SsrA-binding protein (148 aa).

Residues 127–142 (KRESEKERDWERDKAR) are compositionally biased toward basic and acidic residues. The segment at 127–148 (KRESEKERDWERDKARLMRVKT) is disordered.

The protein belongs to the SmpB family.

It is found in the cytoplasm. Functionally, required for rescue of stalled ribosomes mediated by trans-translation. Binds to transfer-messenger RNA (tmRNA), required for stable association of tmRNA with ribosomes. tmRNA and SmpB together mimic tRNA shape, replacing the anticodon stem-loop with SmpB. tmRNA is encoded by the ssrA gene; the 2 termini fold to resemble tRNA(Ala) and it encodes a 'tag peptide', a short internal open reading frame. During trans-translation Ala-aminoacylated tmRNA acts like a tRNA, entering the A-site of stalled ribosomes, displacing the stalled mRNA. The ribosome then switches to translate the ORF on the tmRNA; the nascent peptide is terminated with the 'tag peptide' encoded by the tmRNA and targeted for degradation. The ribosome is freed to recommence translation, which seems to be the essential function of trans-translation. This is SsrA-binding protein from Aromatoleum aromaticum (strain DSM 19018 / LMG 30748 / EbN1) (Azoarcus sp. (strain EbN1)).